Here is a 301-residue protein sequence, read N- to C-terminus: Large ribosomal subunit protein uL18 (301 aa).

Belongs to the universal ribosomal protein uL18 family. Component of the large ribosomal subunit (LSU). Mature N.crassa ribosomes consist of a small (40S) and a large (60S) subunit. The 40S small subunit contains 1 molecule of ribosomal RNA (18S rRNA) and at least 32 different proteins. The large 60S subunit contains 3 rRNA molecules (26S, 5.8S and 5S rRNA) and at least 42 different proteins.

The protein resides in the cytoplasm. Component of the ribosome, a large ribonucleoprotein complex responsible for the synthesis of proteins in the cell. The small ribosomal subunit (SSU) binds messenger RNAs (mRNAs) and translates the encoded message by selecting cognate aminoacyl-transfer RNA (tRNA) molecules. The large subunit (LSU) contains the ribosomal catalytic site termed the peptidyl transferase center (PTC), which catalyzes the formation of peptide bonds, thereby polymerizing the amino acids delivered by tRNAs into a polypeptide chain. The nascent polypeptides leave the ribosome through a tunnel in the LSU and interact with protein factors that function in enzymatic processing, targeting, and the membrane insertion of nascent chains at the exit of the ribosomal tunnel. The polypeptide is Large ribosomal subunit protein uL18 (rpl-5) (Neurospora crassa (strain ATCC 24698 / 74-OR23-1A / CBS 708.71 / DSM 1257 / FGSC 987)).